Reading from the N-terminus, the 336-residue chain is N-acetylornithine carbamoyltransferase (336 aa).

Carbamoyl phosphate-binding positions include 49-52 (SMRT), Trp77, and Arg112. Residue Glu144 participates in N(2)-acetyl-L-ornithine binding. 148–151 (HPCQ) provides a ligand contact to carbamoyl phosphate. 2 residues coordinate N(2)-acetyl-L-ornithine: Lys252 and Leu295. 294-295 (CL) lines the carbamoyl phosphate pocket. Lys302 carries the N6-carboxylysine modification. A carbamoyl phosphate-binding site is contributed by Arg322.

This sequence belongs to the aspartate/ornithine carbamoyltransferase superfamily. AOTCase family. As to quaternary structure, homotrimer.

The protein localises to the cytoplasm. The catalysed reaction is N(2)-acetyl-L-ornithine + carbamoyl phosphate = N(2)-acetyl-L-citrulline + phosphate + H(+). The protein operates within amino-acid biosynthesis; L-arginine biosynthesis. Carboxylation at Lys-302 increases the catalytic activity of the enzyme. Catalyzes the transfer of the carbamoyl group from carbamoyl phosphate to the delta-amino group of N(2)-acetyl-L-ornithine to produce N(2)-acetyl-L-citrulline. This is a step in an alternative arginine biosynthesis pathway. The enzyme has no activity with ornithine. The protein is N-acetylornithine carbamoyltransferase of Xylella fastidiosa (strain 9a5c).